We begin with the raw amino-acid sequence, 120 residues long: Glycine cleavage system H protein (120 aa).

Positions 19–101 (DGTVGITDHA…YEGGWLFKLE (83 aa)) constitute a Lipoyl-binding domain. The residue at position 60 (Lys-60) is an N6-lipoyllysine.

Belongs to the GcvH family. In terms of assembly, the glycine cleavage system is composed of four proteins: P, T, L and H. The cofactor is (R)-lipoate.

The glycine cleavage system catalyzes the degradation of glycine. The H protein shuttles the methylamine group of glycine from the P protein to the T protein. This Deinococcus deserti (strain DSM 17065 / CIP 109153 / LMG 22923 / VCD115) protein is Glycine cleavage system H protein.